The sequence spans 274 residues: Sulfur carrier protein FdhD (274 aa).

The active-site Cysteine persulfide intermediate is C120.

This sequence belongs to the FdhD family.

The protein resides in the cytoplasm. In terms of biological role, required for formate dehydrogenase (FDH) activity. Acts as a sulfur carrier protein that transfers sulfur from IscS to the molybdenum cofactor prior to its insertion into FDH. This is Sulfur carrier protein FdhD from Burkholderia mallei (strain ATCC 23344).